Here is a 346-residue protein sequence, read N- to C-terminus: Peripherin-2 (346 aa).

Residues 1–24 are Cytoplasmic-facing; that stretch reads MALLKVKFDQKKRVKLAQGLWLMN. A helical membrane pass occupies residues 25–43; that stretch reads WLSVLAGIVIFSLGLFLKI. Over 44 to 61 the chain is Lumenal; the sequence is ELRKRSDVMNNSESHFVP. The N-linked (GlcNAc...) asparagine glycan is linked to Asn-53. A helical transmembrane segment spans residues 62–80; it reads NSLIGMGVLSCVFNSLAGK. Residues 81–99 are Cytoplasmic-facing; that stretch reads ICYDALDPSKYAKWKPWLK. The chain crosses the membrane as a helical span at residues 100 to 123; it reads SYLVVCVLFNIVLFLVALCCFLMR. Residues 124 to 264 are Lumenal-facing; it reads GSLESTLAQG…LSYYGSLMNS (141 aa). N-linked (GlcNAc...) asparagine glycosylation occurs at Asn-229. Residues 265 to 290 form a helical membrane-spanning segment; sequence MGAVTLLVWLFEVSITIGLRYLHTAL. Over 291-346 the chain is Cytoplasmic; sequence EGVSNPEDLECESEGWLLEKSVSETWKAFLESLKKLGKSNQVEAEGADAGQAPEAG. The segment at 341–346 is interaction with MREG; sequence QAPEAG.

The protein belongs to the PRPH2/ROM1 family. In terms of assembly, homodimer; disulfide-linked. Forms a homotetramer. Forms a heterotetramer with ROM1. Homotetramer and heterotetramer core complexes go on to form higher order complexes by formation of intermolecular disulfide bonds. Interacts with MREG. Interacts with STX3. Interacts with SNAP25. In terms of tissue distribution, retina (photoreceptor). In rim region of ROS (rod outer segment) disks.

Its subcellular location is the membrane. The protein localises to the cell projection. The protein resides in the cilium. It is found in the photoreceptor outer segment. It localises to the photoreceptor inner segment. Its function is as follows. Essential for retina photoreceptor outer segment disk morphogenesis, may also play a role with ROM1 in the maintenance of outer segment disk structure. Required for the maintenance of retinal outer nuclear layer thickness. Required for the correct development and organization of the photoreceptor inner segment. The sequence is that of Peripherin-2 (PRPH2) from Felis catus (Cat).